A 239-amino-acid chain; its full sequence is tRNA (guanine-N(7)-)-methyltransferase (239 aa).

4 residues coordinate S-adenosyl-L-methionine: glutamate 69, glutamate 94, aspartate 121, and aspartate 144. Aspartate 144 is an active-site residue. Substrate contacts are provided by residues lysine 148, aspartate 180, and 217 to 220 (TNFE).

The protein belongs to the class I-like SAM-binding methyltransferase superfamily. TrmB family. As to quaternary structure, monomer.

The enzyme catalyses guanosine(46) in tRNA + S-adenosyl-L-methionine = N(7)-methylguanosine(46) in tRNA + S-adenosyl-L-homocysteine. The protein operates within tRNA modification; N(7)-methylguanine-tRNA biosynthesis. Its function is as follows. Catalyzes the formation of N(7)-methylguanine at position 46 (m7G46) in tRNA. In Buchnera aphidicola subsp. Schizaphis graminum (strain Sg), this protein is tRNA (guanine-N(7)-)-methyltransferase.